The chain runs to 756 residues: MAVDKELEISDFDNELDEKTLLKELVQRTNNILFSPSKITAIPFERNLLEKTFFGTVDEAEKEKSIVSFFNWMIDLKVLDKKWDKNVLNHYANQLKTREEEQQTVDQTMAFQEVDDQSVLTKEIKTGFQELKPSVITAEDDKDEIKPEATKQVSFEELFNQPSEEINETKKPEVQIFSTDKVKEPEQFDDFYSIENLTKAINPVHKTIQYDQNDDQPFVVKRILKEQHPTKKVDELDDYNNKELLLENADLKKQIDDLKENNNDQIFDLEQEIDDLKRRLSEEKSKHLHTKKLQDDLLQENRDLYEQLQNKPVAINPLSDEVNEELENLKQEKALLSDQLDALKNKSSNVQQQLALLPVLNNQINELQNQLLTAREANQRLDLVEQENDFLKNELKKLHDNTSNDENEKYDDLLNQYELLFDENETKFDKLQVKQQALNLDYQKTISALKHENDVLLDEIEWTRSKDNDFNNTKNSFEEQKKALDEKLNGLTIQNQQLQDKIAELEEWNEEKSNLNTNQLVNLQQQLKDSQNLFNVAQDKLATLEEVNLALNEKINDLEDELSGSENSNNLLAKLQADHEILQESYGKLKTDFEKLKKNKLNDANEQYQDLLSAFEETNSELEKAKQSLSASDSENNQLKQQINSLENAKKELQFTPVTSDEHLDELETLKIEKEQLFLENQALQNQLQYFNDISANQTEEIKEASDEDKPVEIKKPRIKKRDFVIQNKDDKLAKLSKKERIQAYAERLAKINANE.

This is an uncharacterized protein from Mycoplasma genitalium (strain ATCC 33530 / DSM 19775 / NCTC 10195 / G37) (Mycoplasmoides genitalium).